The sequence spans 471 residues: Argininosuccinate lyase (471 aa).

Belongs to the lyase 1 family. Argininosuccinate lyase subfamily.

Its subcellular location is the cytoplasm. The catalysed reaction is 2-(N(omega)-L-arginino)succinate = fumarate + L-arginine. The protein operates within amino-acid biosynthesis; L-arginine biosynthesis; L-arginine from L-ornithine and carbamoyl phosphate: step 3/3. In Renibacterium salmoninarum (strain ATCC 33209 / DSM 20767 / JCM 11484 / NBRC 15589 / NCIMB 2235), this protein is Argininosuccinate lyase.